The primary structure comprises 291 residues: MKRIALFLATNLAVMIVFSIVLNIVYAVTGIQQGSLSGLLVMAVLFGFGGSLVSLLMSKKMALRSVGGEVIEQPRNETEHWLMETVSRQAQQVGIGMPTVAIYDSPDMNAFATGAKRDDSLVAVSTGLLHNMTRDEAEAVLAHEVSHIANGDMITMTLMQGVVNTFVIFLSRMIANAVSGFTSNDEEGEGEGGSFMTYFIVSTVLEIAFGFLASFLTMWFSRHREFYADAGAANLVGKDKMIAALERLRMGQESQLEGSMMAFGINGKKSLTELLMSHPPLEKRINALRQL.

2 consecutive transmembrane segments (helical) span residues 4 to 24 and 36 to 56; these read IALF…VLNI and LSGL…VSLL. H143 serves as a coordination point for Zn(2+). Residue E144 is part of the active site. Residue H147 coordinates Zn(2+). 2 helical membrane passes run 151 to 171 and 199 to 219; these read GDMI…IFLS and FIVS…LTMW. E225 provides a ligand contact to Zn(2+).

Belongs to the peptidase M48B family. Requires Zn(2+) as cofactor.

It localises to the cell inner membrane. The sequence is that of Protease HtpX from Aliivibrio salmonicida (strain LFI1238) (Vibrio salmonicida (strain LFI1238)).